The following is a 302-amino-acid chain: Glycine--tRNA ligase alpha subunit (302 aa).

It belongs to the class-II aminoacyl-tRNA synthetase family. As to quaternary structure, tetramer of two alpha and two beta subunits.

Its subcellular location is the cytoplasm. The catalysed reaction is tRNA(Gly) + glycine + ATP = glycyl-tRNA(Gly) + AMP + diphosphate. The protein is Glycine--tRNA ligase alpha subunit of Psychromonas ingrahamii (strain DSM 17664 / CCUG 51855 / 37).